Here is a 376-residue protein sequence, read N- to C-terminus: 26S proteasome non-ATPase regulatory subunit 13 (376 aa).

One can recognise a PCI domain in the interval Ser171 to Pro338. Residue Lys298 is modified to N6-acetyllysine.

The protein belongs to the proteasome subunit S11 family. As to quaternary structure, component of the 19S proteasome regulatory particle complex. The 26S proteasome consists of a 20S core particle (CP) and two 19S regulatory subunits (RP). The regulatory particle is made of a lid composed of 9 subunits including PSMD13, a base containing 6 ATPases and few additional components.

Its function is as follows. Component of the 26S proteasome, a multiprotein complex involved in the ATP-dependent degradation of ubiquitinated proteins. This complex plays a key role in the maintenance of protein homeostasis by removing misfolded or damaged proteins, which could impair cellular functions, and by removing proteins whose functions are no longer required. Therefore, the proteasome participates in numerous cellular processes, including cell cycle progression, apoptosis, or DNA damage repair. The chain is 26S proteasome non-ATPase regulatory subunit 13 (PSMD13) from Homo sapiens (Human).